A 365-amino-acid polypeptide reads, in one-letter code: Probable cinnamyl alcohol dehydrogenase (365 aa).

C47 provides a ligand contact to Zn(2+). NADP(+) is bound at residue T49. Zn(2+) is bound by residues H69, E70, C100, C103, C106, C114, and C163. NADP(+) is bound by residues T167, 188–193 (GLGGVG), 211–216 (SSSSKK), T251, G275, and 298–300 (SFI).

The protein belongs to the zinc-containing alcohol dehydrogenase family. As to quaternary structure, homodimer. Zn(2+) serves as cofactor.

It catalyses the reaction (E)-cinnamyl alcohol + NADP(+) = (E)-cinnamaldehyde + NADPH + H(+). The catalysed reaction is (E)-coniferol + NADP(+) = (E)-coniferaldehyde + NADPH + H(+). The enzyme catalyses (E)-sinapyl alcohol + NADP(+) = (E)-sinapaldehyde + NADPH + H(+). It carries out the reaction (E)-4-coumaroyl alcohol + NADP(+) = (E)-4-coumaraldehyde + NADPH + H(+). It catalyses the reaction (E)-caffeyl alcohol + NADP(+) = (E)-caffeyl aldehyde + NADPH + H(+). It functions in the pathway aromatic compound metabolism; phenylpropanoid biosynthesis. In terms of biological role, involved in lignin biosynthesis. Catalyzes the final step specific for the production of lignin monomers. Catalyzes the NADPH-dependent reduction of coniferaldehyde, 5-hydroxyconiferaldehyde, sinapaldehyde, 4-coumaraldehyde and caffeyl aldehyde to their respective alcohols. This chain is Probable cinnamyl alcohol dehydrogenase (CAD), found in Saccharum officinarum (Sugarcane).